We begin with the raw amino-acid sequence, 74 residues long: Exodeoxyribonuclease 7 small subunit (74 aa).

It belongs to the XseB family. As to quaternary structure, heterooligomer composed of large and small subunits.

It localises to the cytoplasm. The enzyme catalyses Exonucleolytic cleavage in either 5'- to 3'- or 3'- to 5'-direction to yield nucleoside 5'-phosphates.. Functionally, bidirectionally degrades single-stranded DNA into large acid-insoluble oligonucleotides, which are then degraded further into small acid-soluble oligonucleotides. The protein is Exodeoxyribonuclease 7 small subunit of Synechococcus elongatus (strain ATCC 33912 / PCC 7942 / FACHB-805) (Anacystis nidulans R2).